The chain runs to 510 residues: Histidine ammonia-lyase (510 aa).

The segment at residues 143–145 (ASG) is a cross-link (5-imidazolinone (Ala-Gly)). S144 carries the post-translational modification 2,3-didehydroalanine (Ser).

The protein belongs to the PAL/histidase family. In terms of processing, contains an active site 4-methylidene-imidazol-5-one (MIO), which is formed autocatalytically by cyclization and dehydration of residues Ala-Ser-Gly.

The protein localises to the cytoplasm. It catalyses the reaction L-histidine = trans-urocanate + NH4(+). It functions in the pathway amino-acid degradation; L-histidine degradation into L-glutamate; N-formimidoyl-L-glutamate from L-histidine: step 1/3. This chain is Histidine ammonia-lyase, found in Photobacterium profundum (strain SS9).